A 155-amino-acid chain; its full sequence is Ribosome maturation factor RimP (155 aa).

The protein belongs to the RimP family.

It is found in the cytoplasm. In terms of biological role, required for maturation of 30S ribosomal subunits. The protein is Ribosome maturation factor RimP of Synechococcus sp. (strain CC9902).